The sequence spans 627 residues: Zinc finger protein 256 (627 aa).

One can recognise a KRAB domain in the interval 14 to 96 (VTFEDVAVYF…QKTNPCEICG (83 aa)). The segment at 55–76 (GSGAGDEEAPYQQSTSPQRVSQ) is disordered. Residues 65–75 (YQQSTSPQRVS) show a composition bias toward polar residues. 15 consecutive C2H2-type zinc fingers follow at residues 90–112 (NPCE…QGTH), 239–261 (YMCS…LRVH), 267–289 (YTCG…RRIH), 295–317 (HQCD…QRVH), 323–345 (YKCS…QRIH), 351–373 (YECS…QRVH), 379–401 (YMCS…RRLH), 407–429 (YECS…QRVH), 435–457 (HECH…ERVH), 463–485 (YECS…WKVH), 491–513 (YECG…QRVH), 519–541 (YECN…RRSH), 547–569 (YECS…RRVH), 575–597 (YECS…QRIH), and 603–625 (YECS…QNVH).

This sequence belongs to the krueppel C2H2-type zinc-finger protein family. Interacts with TRIM28.

Its subcellular location is the nucleus. Functionally, transcriptional repressor that plays a role in cell proliferation. Requires TRIM28 for its activity. This Homo sapiens (Human) protein is Zinc finger protein 256 (ZNF256).